A 313-amino-acid polypeptide reads, in one-letter code: 2-phosphoglycerate kinase (313 aa).

One can recognise an ATP-cone domain in the interval 8–95; sequence NKILVKDKDY…LWRRVLKKHS (88 aa).

It belongs to the 2-phosphoglycerate kinase family. Requires a divalent metal cation as cofactor.

It catalyses the reaction (2R)-2-phosphoglycerate + ATP = (2R)-2,3-bisphosphoglycerate + ADP + H(+). It functions in the pathway thermoadapter biosynthesis; cyclic 2,3-diphosphoglycerate biosynthesis; cyclic 2,3-diphosphoglycerate from 2-phospho-D-glycerate: step 1/2. Its function is as follows. Catalyzes the phosphorylation of 2-phosphoglycerate to 2,3-diphosphoglycerate. Involved in the biosynthesis of cyclic 2,3-bisphosphoglycerate, a thermoprotectant. The sequence is that of 2-phosphoglycerate kinase from Methanococcus vannielii (strain ATCC 35089 / DSM 1224 / JCM 13029 / OCM 148 / SB).